An 852-amino-acid polypeptide reads, in one-letter code: DNA mismatch repair protein MutS (852 aa).

ATP is bound at residue 602-609 (GPNMSGKS).

It belongs to the DNA mismatch repair MutS family.

This protein is involved in the repair of mismatches in DNA. It is possible that it carries out the mismatch recognition step. This protein has a weak ATPase activity. This Streptococcus thermophilus (strain ATCC BAA-491 / LMD-9) protein is DNA mismatch repair protein MutS.